Reading from the N-terminus, the 192-residue chain is Intraflagellar transport protein 22 (192 aa).

Residues 12 to 19 (GPQRTGKT) and 62 to 69 (WDVSGSVQ) each bind GTP.

Belongs to the small GTPase superfamily. Rab family. Component of the IFT complex B, composed of IFT88, IFT70, IFT52, IFT46, IFT27, IFT25 and IFT22.

The protein localises to the cell projection. The protein resides in the cilium. Its subcellular location is the flagellum. Component of the intraflagellar transport (IFT) complex B. Functions in regulating the cellular pool size of both complex A and complex B and thus plays a critical role in determining the cellular availability of IFT particles. This Chlamydomonas reinhardtii (Chlamydomonas smithii) protein is Intraflagellar transport protein 22 (FAP9).